Consider the following 23-residue polypeptide: NADP-dependent malic enzyme (23 aa).

It belongs to the malic enzymes family. Homotetramer.

It carries out the reaction (S)-malate + NADP(+) = pyruvate + CO2 + NADPH. The catalysed reaction is oxaloacetate + H(+) = pyruvate + CO2. The chain is NADP-dependent malic enzyme from Populus euphratica (Euphrates poplar).